Here is a 714-residue protein sequence, read N- to C-terminus: Elongation factor G-like protein (714 aa).

The tr-type G domain maps to 21 to 289 (GGVRNVVLVG…VATRGFPSPM (269 aa)). Residues 30–37 (GPSGGGKT) are G1. Residue 30 to 37 (GPSGGGKT) participates in GTP binding. Positions 73–77 (QRSVG) are G2. The interval 94–97 (DTPG) is G3. GTP-binding positions include 94 to 98 (DTPGY) and 148 to 151 (TKLD). The G4 stretch occupies residues 148-151 (TKLD). The segment at 267 to 269 (CSS) is G5.

Belongs to the TRAFAC class translation factor GTPase superfamily. Classic translation factor GTPase family. EF-G/EF-2 subfamily.

This Mycobacterium tuberculosis (strain ATCC 25618 / H37Rv) protein is Elongation factor G-like protein.